We begin with the raw amino-acid sequence, 210 residues long: MNKALVTLLLTLGITGLAHAAGDAAAGQGKAAVCGACHGPDGNSAAPNFPKLAGQGERYLLKQMQDIKAGTKPGAPEGSGRKVLEMTGMLDNFSDQDLADLAAYFTSQKPTVGAADPQLVEAGETLYRGGKLADGMPACTGCHSPNGEGNTPAAYPRLSGQHAQYVAKQLTDFREGARTNDGDNMIMRSIAAKLSNKDIAAISSYIQGLH.

A signal peptide spans 1-20 (MNKALVTLLLTLGITGLAHA). Heme c contacts are provided by Cys-34, Cys-37, His-38, Met-86, Cys-139, Cys-142, His-143, and Met-187.

Binds 2 heme c groups covalently per subunit.

It localises to the periplasm. Functionally, diheme, high potential cytochrome c believed to be an intermediate electron donor to terminal oxidation systems. This Azotobacter vinelandii protein is Cytochrome c4 (cycA).